We begin with the raw amino-acid sequence, 376 residues long: Sterol 24-C-methyltransferase (376 aa).

The protein belongs to the class I-like SAM-binding methyltransferase superfamily. Erg6/SMT family.

The catalysed reaction is zymosterol + S-adenosyl-L-methionine = fecosterol + S-adenosyl-L-homocysteine + H(+). It functions in the pathway steroid metabolism; ergosterol biosynthesis; ergosterol from zymosterol: step 1/5. With respect to regulation, substrate analogs 25-azalanosterol and 24(R,S),25-epiminolanosterol act as inhibitors. Its function is as follows. Sterol 24-C-methyltransferase; part of the third module of ergosterol biosynthesis pathway that includes the late steps of the pathway. ERG6 catalyzes the methyl transfer from S-adenosyl-methionine to the C-24 of zymosterol to form fecosterol. The third module or late pathway involves the ergosterol synthesis itself through consecutive reactions that mainly occur in the endoplasmic reticulum (ER) membrane. Firstly, the squalene synthase ERG9 catalyzes the condensation of 2 farnesyl pyrophosphate moieties to form squalene, which is the precursor of all steroids. Squalene synthase is crucial for balancing the incorporation of farnesyl diphosphate (FPP) into sterol and nonsterol isoprene synthesis. Secondly, the squalene epoxidase ERG1 catalyzes the stereospecific oxidation of squalene to (S)-2,3-epoxysqualene, which is considered to be a rate-limiting enzyme in steroid biosynthesis. Then, the lanosterol synthase ERG7 catalyzes the cyclization of (S)-2,3 oxidosqualene to lanosterol, a reaction that forms the sterol core. In the next steps, lanosterol is transformed to zymosterol through a complex process involving various demethylation, reduction and desaturation reactions. The lanosterol 14-alpha-demethylase ERG11 (also known as CYP51) catalyzes C14-demethylation of lanosterol to produce 4,4'-dimethyl cholesta-8,14,24-triene-3-beta-ol, which is critical for ergosterol biosynthesis. The C-14 reductase ERG24 reduces the C14=C15 double bond of 4,4-dimethyl-cholesta-8,14,24-trienol to produce 4,4-dimethyl-cholesta-8,24-dienol. 4,4-dimethyl-cholesta-8,24-dienol is substrate of the C-4 demethylation complex ERG25-ERG26-ERG27 in which ERG25 catalyzes the three-step monooxygenation required for the demethylation of 4,4-dimethyl and 4alpha-methylsterols, ERG26 catalyzes the oxidative decarboxylation that results in a reduction of the 3-beta-hydroxy group at the C-3 carbon to an oxo group, and ERG27 is responsible for the reduction of the keto group on the C-3. ERG28 has a role as a scaffold to help anchor ERG25, ERG26 and ERG27 to the endoplasmic reticulum and ERG29 regulates the activity of the iron-containing C4-methylsterol oxidase ERG25. Then, the sterol 24-C-methyltransferase ERG6 catalyzes the methyl transfer from S-adenosyl-methionine to the C-24 of zymosterol to form fecosterol. The C-8 sterol isomerase ERG2 catalyzes the reaction which results in unsaturation at C-7 in the B ring of sterols and thus converts fecosterol to episterol. The sterol-C5-desaturase ERG3 then catalyzes the introduction of a C-5 double bond in the B ring to produce 5-dehydroepisterol. The C-22 sterol desaturase ERG5 further converts 5-dehydroepisterol into ergosta-5,7,22,24(28)-tetraen-3beta-ol by forming the C-22(23) double bond in the sterol side chain. Finally, ergosta-5,7,22,24(28)-tetraen-3beta-ol is substrate of the C-24(28) sterol reductase ERG4 to produce ergosterol. This chain is Sterol 24-C-methyltransferase, found in Candida albicans (strain SC5314 / ATCC MYA-2876) (Yeast).